Here is a 116-residue protein sequence, read N- to C-terminus: Nucleoid-associated protein P9301_00191 (116 aa).

It belongs to the YbaB/EbfC family. In terms of assembly, homodimer.

The protein resides in the cytoplasm. Its subcellular location is the nucleoid. In terms of biological role, binds to DNA and alters its conformation. May be involved in regulation of gene expression, nucleoid organization and DNA protection. The chain is Nucleoid-associated protein P9301_00191 from Prochlorococcus marinus (strain MIT 9301).